A 431-amino-acid polypeptide reads, in one-letter code: NADH-quinone oxidoreductase subunit D 2 (431 aa).

The segment at 1-27 (MNDHKGLGGLDTEATPGSFGAGEPPRA) is disordered.

The protein belongs to the complex I 49 kDa subunit family. In terms of assembly, NDH-1 is composed of 14 different subunits. Subunits NuoB, C, D, E, F, and G constitute the peripheral sector of the complex.

It localises to the cell inner membrane. The enzyme catalyses a quinone + NADH + 5 H(+)(in) = a quinol + NAD(+) + 4 H(+)(out). NDH-1 shuttles electrons from NADH, via FMN and iron-sulfur (Fe-S) centers, to quinones in the respiratory chain. The immediate electron acceptor for the enzyme in this species is believed to be ubiquinone. Couples the redox reaction to proton translocation (for every two electrons transferred, four hydrogen ions are translocated across the cytoplasmic membrane), and thus conserves the redox energy in a proton gradient. This Anaeromyxobacter sp. (strain Fw109-5) protein is NADH-quinone oxidoreductase subunit D 2.